The following is a 425-amino-acid chain: Putative E3 ubiquitin-protein ligase UBR7 (425 aa).

Residues 44 to 116 (EKCSYSQGSV…KNLECKLFPD (73 aa)) form a UBR-type zinc finger. The PHD-type; atypical zinc-finger motif lies at 132 to 188 (GLYCVCKRPYPDPEDEVPDEMIQCVVCEDWFHGRHLGAIPPESGDFQEMVCQACMRR). Residues 212–269 (LPNATGMGDEDVSKPENGAPQDNGLKEDAPEHGRDSVNEVKAEQKNEPCSSSSSESDL) are disordered. Glycyl lysine isopeptide (Lys-Gly) (interchain with G-Cter in SUMO2) cross-links involve residues lysine 225 and lysine 252. The span at 235–257 (GLKEDAPEHGRDSVNEVKAEQKN) shows a compositional bias: basic and acidic residues. Residue serine 264 is modified to Phosphoserine. Glycyl lysine isopeptide (Lys-Gly) (interchain with G-Cter in SUMO2) cross-links involve residues lysine 274 and lysine 398.

As to expression, expressed in testis and sperm (at protein level).

The catalysed reaction is S-ubiquitinyl-[E2 ubiquitin-conjugating enzyme]-L-cysteine + [acceptor protein]-L-lysine = [E2 ubiquitin-conjugating enzyme]-L-cysteine + N(6)-ubiquitinyl-[acceptor protein]-L-lysine.. It participates in protein modification; protein ubiquitination. E3 ubiquitin-protein ligase which is a component of the N-end rule pathway. Recognizes and binds to proteins bearing specific N-terminal residues that are destabilizing according to the N-end rule, leading to their ubiquitination and subsequent degradation. This Mus musculus (Mouse) protein is Putative E3 ubiquitin-protein ligase UBR7 (Ubr7).